We begin with the raw amino-acid sequence, 195 residues long: Protein GrpE (195 aa).

The protein belongs to the GrpE family. As to quaternary structure, homodimer.

Its subcellular location is the cytoplasm. Participates actively in the response to hyperosmotic and heat shock by preventing the aggregation of stress-denatured proteins, in association with DnaK and GrpE. It is the nucleotide exchange factor for DnaK and may function as a thermosensor. Unfolded proteins bind initially to DnaJ; upon interaction with the DnaJ-bound protein, DnaK hydrolyzes its bound ATP, resulting in the formation of a stable complex. GrpE releases ADP from DnaK; ATP binding to DnaK triggers the release of the substrate protein, thus completing the reaction cycle. Several rounds of ATP-dependent interactions between DnaJ, DnaK and GrpE are required for fully efficient folding. This is Protein GrpE from Francisella tularensis subsp. holarctica (strain OSU18).